Consider the following 386-residue polypeptide: O-methyltransferase 12 (386 aa).

5 residues coordinate S-adenosyl-L-homocysteine: Ser207, Gly231, Asp254, Asp274, and Lys288. Residue Asp254 coordinates S-adenosyl-L-methionine. Residue His292 is the Proton acceptor of the active site.

The protein belongs to the class I-like SAM-binding methyltransferase superfamily. Cation-independent O-methyltransferase family. As to quaternary structure, homodimer. As to expression, expressed at high levels in all tissues.

It carries out the reaction 4-hydroxy-3,5-dimethoxyphenethylamine + S-adenosyl-L-methionine = mescaline + S-adenosyl-L-homocysteine + H(+). It catalyses the reaction dopamine + S-adenosyl-L-methionine = 4-methoxytyramine + S-adenosyl-L-homocysteine + H(+). It participates in aromatic compound metabolism. Its pathway is alkaloid biosynthesis. O-methyltransferase participating in the biosynthesis of natural products derived from phenylethylamine, including mescaline, a natural hallucinogen potentially used in psychotherapeutic treatments. Catalyzes the O-methylation of dopamine, 4-hydroxy-3,5-dimethoxyphenethylamine, 4,5-dihydroxy-3-methoxyphenethylamine and N-methyl-4,5-dihydroxy-3-methoxyphenethylamine. Also involved in the conversion of N-methyl-4-hydroxy-3,5-dimethoxyphenethylamine to N-methylmescaline. The sequence is that of O-methyltransferase 12 from Lophophora williamsii (Peyote).